Here is a 267-residue protein sequence, read N- to C-terminus: FCS-Like Zinc finger 8 (267 aa).

Disordered stretches follow at residues 1 to 29 (MLKKRSRSKQALMAETNQSQNQKQSKTTP) and 124 to 156 (DSPISSSDFGIKTRNSQPETKKPGSESGLGSPR). Polar residues-rich tracts occupy residues 15-28 (ETNQSQNQKQSKTT) and 126-141 (PISSSDFGIKTRNSQP). Residues 221 to 265 (SFLSCCCNCKKSLGPRDDIFMYRGDRAFCSSECRSIEMMMSEEND) form an FLZ-type zinc finger.

Belongs to the FLZ family. In terms of assembly, interacts with KIN10 and KIN11 via its FLZ-type zinc finger domain. Interacts with KINB1, KINB2, KINB3 and SNF4 via its N-terminal part. Interacts with HB21/ZHD3.

Its function is as follows. May act as an adapter to facilitate the interaction of SnRK1 complex with effector proteins, conferring tissue- and stimulus-type specific differences in the SnRK1 regulation pathway. The protein is FCS-Like Zinc finger 8 of Arabidopsis thaliana (Mouse-ear cress).